Here is a 785-residue protein sequence, read N- to C-terminus: MAAPVSEPTVARQKLLALLGQVQTYVFQIELLRRCDPHIGRGKLPQLKLNALQVRALRRRLRPGLEAQAGAFLTPLSVTLELLLEYAWREGERLLGSLETFATAGDVAAFFTETMGLARPCPYHQRVRLDTYGGTVHMELCFLHDVENFLKQLNYCHLITPSRGATAALERVREFMVGAVGSGLIVPPELSDPSHPCAVCFEELCVTANQGATIARRLADRICNHVTQQAQVRLDANELRRYLPHAAGLSDADRARALSVLDHALARTAGGDGQPHPSPENDSVRKEADALLEAHDVFQATTPGLYAISELRFWLASGDRAGQTTMDAFASNLTALARRELQQETAAVAVELALFGRRAEHFDRAFGSHLAALDMVDALIIGGQATSPDDQIEALIRACYDHHLTTPLLRRLVSPEQCDEEALRRVLARMGAGGAADAPKGGAGPDDDGDRVAVEEGTRGLGAPGGGGEDEDRRRGPGGQGPETWGDIATQAAADVRERRRLYADRLTKRSLASLGRCVREQRGELEKMLRVSVHGEVLPATFAAVANGFAARARFCALTAGAGTVIDNRSAPGVFDAHRFMRASLLRHQVDPALLPSITHRFFELVNGPLFDHSTHSFAQPPNTALYYSVENVGLLPHLKEELARFIMGAGGSGADWAVSEFQRFYCFDGISGITPTQRAAWRYIRELIIATTLFASVYRCGELELRRPDCSRPTSEGRYRYPPGVYLTYDSDCPLVAIVESAPDGCIGPRSVVVYDRDVFSILYSVLQHLAPRLPDGGHDGPP.

The C3H1-type zinc-finger motif lies at 197–225 (CAVCFEELCVTANQGATIARRLADRICNH). The tract at residues 433–489 (GGAADAPKGGAGPDDDGDRVAVEEGTRGLGAPGGGGEDEDRRRGPGGQGPETWGDIA) is disordered. 696-703 (FASVYRCG) contacts ATP.

It belongs to the herpesviridae TRM1 protein family. Associates with TRM2 and TRM3 to form the tripartite terminase complex. Interacts with portal protein.

The protein resides in the host nucleus. Component of the molecular motor that translocates viral genomic DNA in empty capsid during DNA packaging. Forms a tripartite terminase complex together with TRM2 and TRM3 in the host cytoplasm. Once the complex reaches the host nucleus, it interacts with the capsid portal vertex. This portal forms a ring in which genomic DNA is translocated into the capsid. TRM1 carries an endonuclease activity that plays an important role for the cleavage of concatemeric viral DNA into unit length genomes. This chain is Tripartite terminase subunit 1, found in Human herpesvirus 1 (strain Angelotti) (HHV-1).